The chain runs to 510 residues: NAD(P)H-quinone oxidoreductase subunit 2, chloroplastic (510 aa).

Helical transmembrane passes span 24–44, 59–79, 99–119, 124–144, 149–169, 184–204, 229–249, 295–315, 323–343, 354–374, 395–415, and 418–438; these read LLLF…GLIL, WFYF…FFRW, IFQF…VEYI, MAIT…MFLC, LITI…LSGY, LLMG…LYGL, ISIA…PAPF, WHLL…LIAL, MLAY…IVGD, YMLF…SFGL, ALSS…AGFF, and LYLF…IGLL.

It belongs to the complex I subunit 2 family. NDH is composed of at least 16 different subunits, 5 of which are encoded in the nucleus.

Its subcellular location is the plastid. The protein localises to the chloroplast thylakoid membrane. The catalysed reaction is a plastoquinone + NADH + (n+1) H(+)(in) = a plastoquinol + NAD(+) + n H(+)(out). It carries out the reaction a plastoquinone + NADPH + (n+1) H(+)(in) = a plastoquinol + NADP(+) + n H(+)(out). Functionally, NDH shuttles electrons from NAD(P)H:plastoquinone, via FMN and iron-sulfur (Fe-S) centers, to quinones in the photosynthetic chain and possibly in a chloroplast respiratory chain. The immediate electron acceptor for the enzyme in this species is believed to be plastoquinone. Couples the redox reaction to proton translocation, and thus conserves the redox energy in a proton gradient. In Coelogyne cristata (Orchid), this protein is NAD(P)H-quinone oxidoreductase subunit 2, chloroplastic.